The sequence spans 257 residues: Phycoerythrobilin:ferredoxin oxidoreductase (257 aa).

This sequence belongs to the HY2 family.

It catalyses the reaction (3Z)-phycoerythrobilin + oxidized 2[4Fe-4S]-[ferredoxin] = 15,16-dihydrobiliverdin + reduced 2[4Fe-4S]-[ferredoxin] + 2 H(+). Its function is as follows. Catalyzes the two-electron reduction of the C2 and C3(1) diene system of 15,16-dihydrobiliverdin. The sequence is that of Phycoerythrobilin:ferredoxin oxidoreductase from Synechococcus sp. (strain CC9311).